Here is a 764-residue protein sequence, read N- to C-terminus: Chloride anion exchanger (764 aa).

Residues 1 to 76 (MIEPFGNQYI…YRLKEWLLSD (76 aa)) lie on the Cytoplasmic side of the membrane. The helical transmembrane segment at 77 to 97 (IVSGISTGIVAVLQGLAFALL) threads the bilayer. At 98–99 (VD) the chain is on the extracellular side. Residues 100–120 (IPPVYGLYASFFPAIIYLFFG) traverse the membrane as a helical segment. Residues 121-124 (TSRH) lie on the Cytoplasmic side of the membrane. The chain crosses the membrane as a helical span at residues 125–145 (ISVGPFPILSMMVGLAVSGAV). Residues 146 to 175 (SKAVPDRNATTLGLPNNSNNSSLLDDERVR) are Extracellular-facing. 3 N-linked (GlcNAc...) asparagine glycosylation sites follow: asparagine 153, asparagine 161, and asparagine 165. Residues 176 to 196 (VAAAASVTVLSGIIQLAFGIL) traverse the membrane as a helical segment. A topological domain (cytoplasmic) is located at residue arginine 197. A helical transmembrane segment spans residues 198-218 (IGFVVIYLSESLISGFTTAAA). Over 219–257 (VHVLVSQLKFIFQLTVPSHTDPVSIFKVLYSVFSQIEKT) the chain is Extracellular. The chain crosses the membrane as a helical span at residues 258 to 278 (NIADLVTALIVLLVVSIVKEI). The Cytoplasmic segment spans residues 279–342 (NQRFKDKLPV…VETFQNTVGD (64 aa)). Residues 343–363 (CFGIAMVAFAVAFSVASVYSL) form a helical membrane-spanning segment. The Extracellular portion of the chain corresponds to 364–374 (KYDYPLDGNQE). A helical membrane pass occupies residues 375–395 (LIALGLGNIVCGVFRGFAGST). Residues 396–411 (ALSRSAVQESTGGKTQ) lie on the Cytoplasmic side of the membrane. A helical transmembrane segment spans residues 412–432 (IAGLIGAIIVLIVVLAIGFLL). The Extracellular portion of the chain corresponds to 433–469 (APLQKSVLAALALGNLKGMLMQFAEIGRLWRKDKYDC). A helical transmembrane segment spans residues 470–490 (LIWIMTFIFTIVLGLGLGLAA). Residues 491 to 701 (SVAFQLLTIV…EKLNRYEFFD (211 aa)) lie on the Cytoplasmic side of the membrane. The STAS domain maps to 525 to 720 (DYYDMYEPEG…LTIHDAVLHI (196 aa)). A PDZ-binding motif is present at residues 761-764 (ETKF).

It belongs to the SLC26A/SulP transporter (TC 2.A.53) family. As to quaternary structure, interacts with CFTR, SLC26A6 and NHERF1. Interacts with PDZK1. Interacts (via PDZ-binding motif) with NHERF4 (via the third PDZ domain); interaction leads to decreased expression of SLC26A3 on the cell membrane resulting in its reduced exchanger activity. Post-translationally, N-glycosylation is required for efficient cell surface expression, and protection from proteolytic degradation. In terms of tissue distribution, expressed in the colon. Expression is significantly decreased in adenomas (polyps) and adenocarcinomas of the colon.

The protein resides in the apical cell membrane. Its subcellular location is the membrane. It localises to the cell membrane. It catalyses the reaction hydrogencarbonate(in) + 2 chloride(out) = hydrogencarbonate(out) + 2 chloride(in). Inhibited by acidic pH. Mediates chloride-bicarbonate exchange with a chloride bicarbonate stoichiometry of 2:1 in the intestinal epithelia. Plays a role in the chloride and bicarbonate homeostasis during sperm epididymal maturation and capacitation. This chain is Chloride anion exchanger (SLC26A3), found in Homo sapiens (Human).